A 373-amino-acid polypeptide reads, in one-letter code: MTTVKTNLLDLDRKGLRTYFAEELNEKAFRADQIMKWIYQFGCDDFDQMTNINKKLREKLKRVAEIRAPYVSQAQHSVDGTIKWAMRVGDQDVETVYIPDGDRATLCVSSQVGCALACTFCSTAQQGFNRNLRVSEIIGQVWRAAKEIGIEKDTGRRPITNVVMMGMGEPLLNMKNLIPALEIMLDDIGFGLSKRRVTVSTSGVVSGLDQMTGNIDVALAISLHAPTDELRSQIMPINDRFNIATFLESVSRYIEQSNANRGRVTVEYILLDHVNDDMEHARQLAVLLKDTPAKINLIPFNPYPGSPYRKPSNSRIDRFMKTLMEYDFTVTVRKTRGDDIDAACGQLVGDVIDRTKRTQVKQHDGEQIPVKTV.

The active-site Proton acceptor is the Glu94. Positions 100-339 (DGDRATLCVS…VTVRKTRGDD (240 aa)) constitute a Radical SAM core domain. A disulfide bridge connects residues Cys107 and Cys344. Positions 114, 118, and 121 each coordinate [4Fe-4S] cluster. Residues 168–169 (GE), Ser200, 222–224 (SLH), and Asn301 contribute to the S-adenosyl-L-methionine site. Cys344 serves as the catalytic S-methylcysteine intermediate.

Belongs to the radical SAM superfamily. RlmN family. [4Fe-4S] cluster serves as cofactor.

The protein resides in the cytoplasm. It catalyses the reaction adenosine(2503) in 23S rRNA + 2 reduced [2Fe-2S]-[ferredoxin] + 2 S-adenosyl-L-methionine = 2-methyladenosine(2503) in 23S rRNA + 5'-deoxyadenosine + L-methionine + 2 oxidized [2Fe-2S]-[ferredoxin] + S-adenosyl-L-homocysteine. The enzyme catalyses adenosine(37) in tRNA + 2 reduced [2Fe-2S]-[ferredoxin] + 2 S-adenosyl-L-methionine = 2-methyladenosine(37) in tRNA + 5'-deoxyadenosine + L-methionine + 2 oxidized [2Fe-2S]-[ferredoxin] + S-adenosyl-L-homocysteine. Functionally, specifically methylates position 2 of adenine 2503 in 23S rRNA and position 2 of adenine 37 in tRNAs. m2A2503 modification seems to play a crucial role in the proofreading step occurring at the peptidyl transferase center and thus would serve to optimize ribosomal fidelity. In Photobacterium profundum (strain SS9), this protein is Dual-specificity RNA methyltransferase RlmN.